Here is a 735-residue protein sequence, read N- to C-terminus: Translation initiation factor IF-2 (735 aa).

Basic and acidic residues-rich tracts occupy residues 52-66 and 101-117; these read VNSE…EKPK and KGKE…EKKL. The disordered stretch occupies residues 52–154; the sequence is VNSEKKAEKK…PAKKEKELPK (103 aa). A compositionally biased stretch (basic residues) spans 121–133; that stretch reads AKKKGKGPMKGKK. Residues 134-145 are compositionally biased toward low complexity; the sequence is QAAPASKQAQQP. The tr-type G domain occupies 236–405; it reads ERPPVVTIMG…LLVSEMEELK (170 aa). The interval 245–252 is G1; sequence GHVDHGKT. 245–252 contacts GTP; sequence GHVDHGKT. The tract at residues 270-274 is G2; that stretch reads GITQH. Residues 291–294 are G3; sequence DTPG. GTP is bound by residues 291–295 and 345–348; these read DTPGH and NKMD. Residues 345–348 form a G4 region; sequence NKMD. Residues 381–383 are G5; that stretch reads SAK.

This sequence belongs to the TRAFAC class translation factor GTPase superfamily. Classic translation factor GTPase family. IF-2 subfamily.

It is found in the cytoplasm. Functionally, one of the essential components for the initiation of protein synthesis. Protects formylmethionyl-tRNA from spontaneous hydrolysis and promotes its binding to the 30S ribosomal subunits. Also involved in the hydrolysis of GTP during the formation of the 70S ribosomal complex. The protein is Translation initiation factor IF-2 of Geobacillus thermodenitrificans (strain NG80-2).